The following is a 328-amino-acid chain: Methionyl-tRNA formyltransferase (328 aa).

Position 121–124 (121–124 (SLLP)) interacts with (6S)-5,6,7,8-tetrahydrofolate.

It belongs to the Fmt family.

It catalyses the reaction L-methionyl-tRNA(fMet) + (6R)-10-formyltetrahydrofolate = N-formyl-L-methionyl-tRNA(fMet) + (6S)-5,6,7,8-tetrahydrofolate + H(+). Attaches a formyl group to the free amino group of methionyl-tRNA(fMet). The formyl group appears to play a dual role in the initiator identity of N-formylmethionyl-tRNA by promoting its recognition by IF2 and preventing the misappropriation of this tRNA by the elongation apparatus. This Paraburkholderia phytofirmans (strain DSM 17436 / LMG 22146 / PsJN) (Burkholderia phytofirmans) protein is Methionyl-tRNA formyltransferase.